Here is a 308-residue protein sequence, read N- to C-terminus: Putative acetyl-hydrolase LipR (308 aa).

The first 40 residues, 1-40, serve as a signal peptide directing secretion; sequence MNLRKNVIRSVLRGARPLFASRRLGIAGRRVLLATLTAGA. The short motif at 76–78 is the Involved in the stabilization of the negatively charged intermediate by the formation of the oxyanion hole element; the sequence is HGG. Catalysis depends on residues serine 146, aspartate 239, and histidine 269.

This sequence belongs to the 'GDXG' lipolytic enzyme family.

Its function is as follows. Required for maintaining the appropriate mycolic acid composition and permeability of the envelope on its exposure to acidic pH. This Mycobacterium tuberculosis (strain ATCC 25618 / H37Rv) protein is Putative acetyl-hydrolase LipR (lipR).